The sequence spans 330 residues: PDZ and LIM domain protein 4 (330 aa).

The PDZ domain occupies 1–84 (MTHAVTLRGP…HLTLSVSRPE (84 aa)). Disordered regions lie at residues 104–154 (DPEA…NEVT) and 219–239 (EAGEGGDRPGSGGSRNLKPAA). 6 positions are modified to phosphoserine: serine 111, serine 115, serine 118, serine 119, serine 124, and serine 134. The span at 111 to 122 (SPATSRRSSISG) shows a compositional bias: polar residues. The LIM zinc-binding domain maps to 255 to 305 (CTRCGHGIVGTIVKARDKLYHPECFMCSDCGLNLKQRGYFFLDERLYCENH).

As to quaternary structure, homodimer. Interacts (via C-terminus only or via combined C-terminus and LIM domain, but not LIM domain only) with PTPN13 (via the second or fourth PDZ domains). Found in a complex with PTPN13 and TRIP6. Interacts (via PDZ domain) with ACTN1 and ACTN2 (via C-terminal SDL residues). Interacts (via PDZ domain) with TRIP6 (via the second LIM domain or via the third LIM domain plus C-terminus). Interacts (via LIM domain) with GRIA1 (via C-terminus); this interaction as well as the interaction with alpha-actinin is required for their colocalization in early endosomes. Interacts with PDLIM1. Forms (via LIM domain) a heterodimer with PDLIM3. Interacts directly with SRC (via kinase domain and to a lesser extent the SH2 domain). Phosphorylated on tyrosine residue(s). Can be dephosphorylated by PTPN13. As to expression, detected in several tissues, most prominent in brain and heart of adults. Expressed in embryonic fibroblasts.

It is found in the cytoplasm. Its subcellular location is the cytoskeleton. The protein resides in the cell projection. It localises to the dendritic spine. The protein localises to the early endosome membrane. It is found in the recycling endosome membrane. Its subcellular location is the nucleus. The protein resides in the perinuclear region. It localises to the lamellipodium. The protein localises to the synapse. It is found in the synaptosome. Suppresses SRC activation by recognizing and binding to active SRC and facilitating PTPN13-mediated dephosphorylation of SRC 'Tyr-419' leading to its inactivation. Inactivated SRC dissociates from this protein allowing the initiation of a new SRC inactivation cycle. Involved in reorganization of the actin cytoskeleton. In nonmuscle cells, binds to ACTN1 (alpha-actinin-1), increases the affinity of ACTN1 to F-actin (filamentous actin), and promotes formation of actin stress fibers. Involved in regulation of the synaptic AMPA receptor transport in dendritic spines of hippocampal pyramidal neurons directing the receptors toward an insertion at the postsynaptic membrane. Links endosomal surface-internalized GRIA1-containing AMPA receptors to the alpha-actinin/actin cytoskeleton. Increases AMPA receptor-mediated excitatory postsynaptic currents in neurons. The sequence is that of PDZ and LIM domain protein 4 (Pdlim4) from Rattus norvegicus (Rat).